The chain runs to 182 residues: MSESTTGPCHDSLKAYVREIPDYPKPGILFYDITTLIKEPVGLARTIDGITEHFLNKNIDLVVGMEARGFIFGPAVAYRLNAGFIPIRKPRKLPGETVKHTYKLEYGEDTLEIHKDAIQKAQRVLVVDDLLATGGTAVAATELVKQLGGEICGIAFVIELDFLNGRERLKDYDVYSLLHYDK.

Belongs to the purine/pyrimidine phosphoribosyltransferase family. As to quaternary structure, homodimer.

Its subcellular location is the cytoplasm. The catalysed reaction is AMP + diphosphate = 5-phospho-alpha-D-ribose 1-diphosphate + adenine. The protein operates within purine metabolism; AMP biosynthesis via salvage pathway; AMP from adenine: step 1/1. Its function is as follows. Catalyzes a salvage reaction resulting in the formation of AMP, that is energically less costly than de novo synthesis. The polypeptide is Adenine phosphoribosyltransferase (Koribacter versatilis (strain Ellin345)).